A 394-amino-acid polypeptide reads, in one-letter code: A-type flagellin (394 aa).

This sequence belongs to the bacterial flagellin family. In terms of processing, phosphorylated on tyrosine residue(s). Post-translationally, flagellin from strain 5939 but not from strain 170018 is glycosylated.

It is found in the secreted. The protein localises to the bacterial flagellum. In terms of biological role, flagellin is the subunit protein which polymerizes to form the filaments of bacterial flagella. This is A-type flagellin (fliC) from Pseudomonas aeruginosa.